The primary structure comprises 130 residues: Small ribosomal subunit protein uS8 (130 aa).

Belongs to the universal ribosomal protein uS8 family. Part of the 30S ribosomal subunit. Contacts proteins S5 and S12.

Functionally, one of the primary rRNA binding proteins, it binds directly to 16S rRNA central domain where it helps coordinate assembly of the platform of the 30S subunit. This is Small ribosomal subunit protein uS8 from Onion yellows phytoplasma (strain OY-M).